Here is a 432-residue protein sequence, read N- to C-terminus: MTVYHFVGIKGTGMSPLAQILHDTGYTVQGSDIEKHIFTQKALEERNIKILPFDPDNIQPGMTVIAGNAFPDTHPEIERALSEGIPVIRYHKFLGEYMDSFTNVAITGAHGKTSTTGLLAHVMQSAKPTSYLIGDGSGMGKENSEYFVFEACEYRRHFLSYHPDYAIMTNIDFDHPDYFSDIDDVFDAFQNMALQVKKAIIACGDDEHLPKIQAKVPVVYYGFNEENDFQARNVVKNTEGTTFDVFVRNTFYDTFYIPAYGNHNVLNSLAVIALCHYESIDVELIKGALTTFGGVKRRFNEKVVGAQVLIDDYAHHPTEIEVTIEAARQKYPDREIVAVFQPHTFTRTQQFLSEFADSLKKADYVYLCDIFGSARENIGKLSIEDLREKIPQAQLIAEEDTSVLKAHKDGILIFMGAGDIQKYLRAYEKVAV.

108–114 (GAHGKTS) contacts ATP.

Belongs to the MurCDEF family.

It localises to the cytoplasm. The catalysed reaction is UDP-N-acetyl-alpha-D-muramate + L-alanine + ATP = UDP-N-acetyl-alpha-D-muramoyl-L-alanine + ADP + phosphate + H(+). The protein operates within cell wall biogenesis; peptidoglycan biosynthesis. In terms of biological role, cell wall formation. This is UDP-N-acetylmuramate--L-alanine ligase from Bacillus pumilus (strain SAFR-032).